We begin with the raw amino-acid sequence, 474 residues long: tRNA-2-methylthio-N(6)-dimethylallyladenosine synthase (474 aa).

The region spanning 3 to 120 (KKLHIKTWGC…LPEMINSVRG (118 aa)) is the MTTase N-terminal domain. 6 residues coordinate [4Fe-4S] cluster: cysteine 12, cysteine 49, cysteine 83, cysteine 157, cysteine 161, and cysteine 164. Positions 143–375 (RAEGPTAFVS…QERINQQAMA (233 aa)) constitute a Radical SAM core domain. The TRAM domain maps to 378–441 (RRMLGTVQRI…TNSLRGKIVR (64 aa)).

Belongs to the methylthiotransferase family. MiaB subfamily. Monomer. The cofactor is [4Fe-4S] cluster.

It is found in the cytoplasm. It catalyses the reaction N(6)-dimethylallyladenosine(37) in tRNA + (sulfur carrier)-SH + AH2 + 2 S-adenosyl-L-methionine = 2-methylsulfanyl-N(6)-dimethylallyladenosine(37) in tRNA + (sulfur carrier)-H + 5'-deoxyadenosine + L-methionine + A + S-adenosyl-L-homocysteine + 2 H(+). In terms of biological role, catalyzes the methylthiolation of N6-(dimethylallyl)adenosine (i(6)A), leading to the formation of 2-methylthio-N6-(dimethylallyl)adenosine (ms(2)i(6)A) at position 37 in tRNAs that read codons beginning with uridine. This Klebsiella pneumoniae subsp. pneumoniae (strain ATCC 700721 / MGH 78578) protein is tRNA-2-methylthio-N(6)-dimethylallyladenosine synthase.